A 415-amino-acid chain; its full sequence is Phosphoglycerate kinase (415 aa).

(2R)-3-phosphoglycerate contacts are provided by Val22, Asp23, Phe24, Asn25, Gln37, Arg38, Ser61, His62, Gly64, Arg65, Arg121, His168, and Arg169. Gly212 provides a ligand contact to ADP. Residue Gly212 participates in CDP binding. AMP contacts are provided by Ala213 and Lys214. Position 213 (Ala213) interacts with ATP. Ala213 serves as a coordination point for Mg(2+). The Mg(2+) site is built by Ala216 and Asp217. Asp217 contacts CDP. Residue Lys218 participates in AMP binding. Lys218 lines the ATP pocket. An ADP-binding site is contributed by Gly236. Gly236 is a binding site for CDP. Positions 237 and 311 each coordinate AMP. Residues Gly237 and Gly311 each coordinate ATP. CDP contacts are provided by Gly336 and Phe341. Residue Phe341 participates in ADP binding. An AMP-binding site is contributed by Glu342. Glu342, Asp373, and Thr374 together coordinate ATP. Asp373 is a binding site for Mg(2+).

It belongs to the phosphoglycerate kinase family. As to quaternary structure, monomer. Mg(2+) serves as cofactor.

Its subcellular location is the cytoplasm. The enzyme catalyses (2R)-3-phosphoglycerate + ATP = (2R)-3-phospho-glyceroyl phosphate + ADP. The protein operates within carbohydrate degradation; glycolysis; pyruvate from D-glyceraldehyde 3-phosphate: step 2/5. In terms of biological role, enzyme of the glycolytic pathway. Glycolysis is essential in glial cells but not in neurons; neurons rely on the citric acid cycle for their energy needs, and on lactate and alanine secreted into the hemolymph by glial cells to fuel it. This Drosophila melanogaster (Fruit fly) protein is Phosphoglycerate kinase.